The chain runs to 162 residues: NADH-quinone oxidoreductase subunit C (162 aa).

Belongs to the complex I 30 kDa subunit family. NDH-1 is composed of 14 different subunits. Subunits NuoB, C, D, E, F, and G constitute the peripheral sector of the complex.

Its subcellular location is the cell inner membrane. The enzyme catalyses a quinone + NADH + 5 H(+)(in) = a quinol + NAD(+) + 4 H(+)(out). In terms of biological role, NDH-1 shuttles electrons from NADH, via FMN and iron-sulfur (Fe-S) centers, to quinones in the respiratory chain. The immediate electron acceptor for the enzyme in this species is believed to be ubiquinone. Couples the redox reaction to proton translocation (for every two electrons transferred, four hydrogen ions are translocated across the cytoplasmic membrane), and thus conserves the redox energy in a proton gradient. This chain is NADH-quinone oxidoreductase subunit C, found in Trichlorobacter lovleyi (strain ATCC BAA-1151 / DSM 17278 / SZ) (Geobacter lovleyi).